Consider the following 306-residue polypeptide: Dihydroorotate dehydrogenase B (NAD(+)), catalytic subunit (306 aa).

FMN-binding positions include Ser-22 and 46-47 (KG). Residues Lys-46 and 70–74 (NAIGL) each bind substrate. Residues Asn-100 and Asn-128 each contribute to the FMN site. Asn-128 is a substrate binding site. Cys-131 (nucleophile) is an active-site residue. Lys-167 and Ile-193 together coordinate FMN. 194-195 (NT) provides a ligand contact to substrate. FMN is bound by residues Gly-219, 245–246 (GG), and 267–268 (GT).

It belongs to the dihydroorotate dehydrogenase family. Type 1 subfamily. Heterotetramer of 2 PyrK and 2 PyrD type B subunits. The cofactor is FMN.

Its subcellular location is the cytoplasm. It catalyses the reaction (S)-dihydroorotate + NAD(+) = orotate + NADH + H(+). Its pathway is pyrimidine metabolism; UMP biosynthesis via de novo pathway; orotate from (S)-dihydroorotate (NAD(+) route): step 1/1. In terms of biological role, catalyzes the conversion of dihydroorotate to orotate with NAD(+) as electron acceptor. The polypeptide is Dihydroorotate dehydrogenase B (NAD(+)), catalytic subunit (pyrD) (Solidesulfovibrio magneticus (strain ATCC 700980 / DSM 13731 / RS-1) (Desulfovibrio magneticus)).